The primary structure comprises 229 residues: Octanoyltransferase (229 aa).

Positions 47–225 constitute a BPL/LPL catalytic domain; sequence PSSPEAVWIL…SLAARFHLAW (179 aa). Substrate-binding positions include 89 to 96, 156 to 158, and 169 to 171; these read RGGEVTHH, AIG, and GLA. Cys187 functions as the Acyl-thioester intermediate in the catalytic mechanism.

The protein belongs to the LipB family.

It is found in the cytoplasm. It carries out the reaction octanoyl-[ACP] + L-lysyl-[protein] = N(6)-octanoyl-L-lysyl-[protein] + holo-[ACP] + H(+). Its pathway is protein modification; protein lipoylation via endogenous pathway; protein N(6)-(lipoyl)lysine from octanoyl-[acyl-carrier-protein]: step 1/2. Functionally, catalyzes the transfer of endogenously produced octanoic acid from octanoyl-acyl-carrier-protein onto the lipoyl domains of lipoate-dependent enzymes. Lipoyl-ACP can also act as a substrate although octanoyl-ACP is likely to be the physiological substrate. The chain is Octanoyltransferase from Synechococcus sp. (strain CC9902).